The chain runs to 116 residues: uncharacterized protein (116 aa).

The helical transmembrane segment at 52-72 (VFCSANSVPLYLLLLTSALHF) threads the bilayer.

It is found in the mitochondrion membrane. This is an uncharacterized protein from Arabidopsis thaliana (Mouse-ear cress).